Here is a 336-residue protein sequence, read N- to C-terminus: Holliday junction branch migration complex subunit RuvB (336 aa).

Residues 2–186 (QDQEEERMIT…FGVICKLELY (185 aa)) are large ATPase domain (RuvB-L). Residues Leu25, Arg26, Gly67, Lys70, Thr71, Thr72, 133–135 (EDF), Arg176, Tyr186, and Arg223 contribute to the ATP site. Thr71 contributes to the Mg(2+) binding site. The interval 187–257 (NNKQLTAIVK…VAEEALILLE (71 aa)) is small ATPAse domain (RuvB-S). The interval 260-336 (SLGLDNTDKK…YEHFNIPSAE (77 aa)) is head domain (RuvB-H). DNA-binding residues include Arg296, Arg315, and Arg320.

Belongs to the RuvB family. In terms of assembly, homohexamer. Forms an RuvA(8)-RuvB(12)-Holliday junction (HJ) complex. HJ DNA is sandwiched between 2 RuvA tetramers; dsDNA enters through RuvA and exits via RuvB. An RuvB hexamer assembles on each DNA strand where it exits the tetramer. Each RuvB hexamer is contacted by two RuvA subunits (via domain III) on 2 adjacent RuvB subunits; this complex drives branch migration. In the full resolvosome a probable DNA-RuvA(4)-RuvB(12)-RuvC(2) complex forms which resolves the HJ.

The protein resides in the cytoplasm. It catalyses the reaction ATP + H2O = ADP + phosphate + H(+). The RuvA-RuvB-RuvC complex processes Holliday junction (HJ) DNA during genetic recombination and DNA repair, while the RuvA-RuvB complex plays an important role in the rescue of blocked DNA replication forks via replication fork reversal (RFR). RuvA specifically binds to HJ cruciform DNA, conferring on it an open structure. The RuvB hexamer acts as an ATP-dependent pump, pulling dsDNA into and through the RuvAB complex. RuvB forms 2 homohexamers on either side of HJ DNA bound by 1 or 2 RuvA tetramers; 4 subunits per hexamer contact DNA at a time. Coordinated motions by a converter formed by DNA-disengaged RuvB subunits stimulates ATP hydrolysis and nucleotide exchange. Immobilization of the converter enables RuvB to convert the ATP-contained energy into a lever motion, pulling 2 nucleotides of DNA out of the RuvA tetramer per ATP hydrolyzed, thus driving DNA branch migration. The RuvB motors rotate together with the DNA substrate, which together with the progressing nucleotide cycle form the mechanistic basis for DNA recombination by continuous HJ branch migration. Branch migration allows RuvC to scan DNA until it finds its consensus sequence, where it cleaves and resolves cruciform DNA. This is Holliday junction branch migration complex subunit RuvB from Alkaliphilus metalliredigens (strain QYMF).